The primary structure comprises 78 residues: MSLEERVKEIIAEQLGVEKEKITPEAKFVEDLGADSLDVVELIMAFEEEFGIEIPDEDAEKIQTVGDVINYLKEKVGG.

Residues 1-76 form the Carrier domain; that stretch reads MSLEERVKEI…DVINYLKEKV (76 aa). Serine 36 carries the O-(pantetheine 4'-phosphoryl)serine modification.

This sequence belongs to the acyl carrier protein (ACP) family. In terms of processing, 4'-phosphopantetheine is transferred from CoA to a specific serine of apo-ACP by AcpS. This modification is essential for activity because fatty acids are bound in thioester linkage to the sulfhydryl of the prosthetic group.

It is found in the cytoplasm. It functions in the pathway lipid metabolism; fatty acid biosynthesis. Functionally, carrier of the growing fatty acid chain in fatty acid biosynthesis. The protein is Acyl carrier protein of Aquifex aeolicus (strain VF5).